The sequence spans 187 residues: Biphenyl 2,3-dioxygenase subunit beta (187 aa).

Belongs to the bacterial ring-hydroxylating dioxygenase beta subunit family. As to quaternary structure, heterohexamer consisting of three BphA1 subunits and three BphA2 subunits. The multicomponent biphenyl dioxygenase system is composed of a ferredoxin reductase (BphA4), a ferredoxin (BphA3), and a terminal oxygenase (BphA1A2).

The catalysed reaction is biphenyl + NADH + O2 + H(+) = (2R,3S)-3-phenylcyclohexa-3,5-diene-1,2-diol + NAD(+). It participates in xenobiotic degradation; biphenyl degradation; 2-hydroxy-2,4-pentadienoate and benzoate from biphenyl: step 1/4. Part of the oxygenase component of the biphenyl dioxygenase system that catalyzes the stereospecific dihydroxylation of the aromatic ring of biphenyl, yielding a dihydrodiol compound. Is likely involved in biphenyl degradation that allows growth of Rhodococcus sp. strain RHA1 on biphenyl as the sole source of carbon and energy. Can also use naphtalene and 4-chlorobiphenyl (4-CB) as substrates, as well as some polychlorinated biphenyls (PCB) such as 2,2'-dichlorobiphenyl, 2,3-dichlorobiphenyl and 2,5,2'-trichlorobiphenyl. Exhibits weak activity toward dibenzofuran and dibenzo-p-dioxin. Electrons are transferred from NADH to the [2Fe-2S] cluster in BphA1 via FAD of BphA4 and [2Fe-2S] cluster of BphA3. The chain is Biphenyl 2,3-dioxygenase subunit beta from Rhodococcus jostii (strain RHA1).